Consider the following 420-residue polypeptide: Serine hydroxymethyltransferase (420 aa).

(6S)-5,6,7,8-tetrahydrofolate contacts are provided by residues leucine 121 and 125-127 (GHL). N6-(pyridoxal phosphate)lysine is present on lysine 230. Residues glutamate 246 and 354 to 356 (SPF) each bind (6S)-5,6,7,8-tetrahydrofolate.

Belongs to the SHMT family. Homodimer. Pyridoxal 5'-phosphate serves as cofactor.

The protein resides in the cytoplasm. It catalyses the reaction (6R)-5,10-methylene-5,6,7,8-tetrahydrofolate + glycine + H2O = (6S)-5,6,7,8-tetrahydrofolate + L-serine. It participates in one-carbon metabolism; tetrahydrofolate interconversion. Its pathway is amino-acid biosynthesis; glycine biosynthesis; glycine from L-serine: step 1/1. Functionally, catalyzes the reversible interconversion of serine and glycine with tetrahydrofolate (THF) serving as the one-carbon carrier. This reaction serves as the major source of one-carbon groups required for the biosynthesis of purines, thymidylate, methionine, and other important biomolecules. Also exhibits THF-independent aldolase activity toward beta-hydroxyamino acids, producing glycine and aldehydes, via a retro-aldol mechanism. The protein is Serine hydroxymethyltransferase of Rickettsia prowazekii (strain Madrid E).